The sequence spans 630 residues: tRNA uridine 5-carboxymethylaminomethyl modification enzyme MnmG (630 aa).

Position 13-18 (13-18 (GGGHAG)) interacts with FAD. 273-287 (GPRYCPSIEDKVNRF) is a binding site for NAD(+).

Belongs to the MnmG family. As to quaternary structure, homodimer. Heterotetramer of two MnmE and two MnmG subunits. Requires FAD as cofactor.

The protein localises to the cytoplasm. Functionally, NAD-binding protein involved in the addition of a carboxymethylaminomethyl (cmnm) group at the wobble position (U34) of certain tRNAs, forming tRNA-cmnm(5)s(2)U34. This chain is tRNA uridine 5-carboxymethylaminomethyl modification enzyme MnmG, found in Teredinibacter turnerae (strain ATCC 39867 / T7901).